The following is a 1311-amino-acid chain: MSRRKQAKPRSVKVEEGEASDFSLAWDSSVAAAGGLEGESECDRKSSRALEDRNSVTSQEERNEDDEDVEDESIYTCDHCQQDFESLADLTDHRAHRCPGDGDDDPQLSWVASSPSSKDVASPTQMIGDGCDLGLGEEEGGTGLPYPCQFCDKSFIRLSYLKRHEQIHSDKLPFKCTFCSRLFKHKRSRDRHIKLHTGDKKYHCHECEAAFSRRDHLKIHLKTHSSSKPFKCSVCKRGFSSTSSLQSHMQAHKKNKEHLAKSEKEAKKDDFMCDYCEDTFSQTEELEKHVLTLHPQLSEKADLQCIHCPEVFVDESTLLAHIHQAHANQKHKCPMCPEQFSSVEGVYCHLDSHRQPDSSNHSVSPDPVLGSVASMSSATPDSTPDPVLGSVASMSSATPDSSASVERGSTPDSTLKPLRGQKKMRDDGQSWSKVVYSCPYCSKRDFTSLAVLEIHLKTIHADKPQQSHTCQICLDSMPTLYNLNEHVRKLHKSHAYPVMQFGNISAFHCNYCPEMFADINSLQEHIRVSHCGPNANPPDGNNAFFCNQCSMGFLTESSLTEHIQQAHCSVGSTKLESPVIQPTQSFMEVYSCPYCTNSPIFGSILKLTKHIKENHKNIPLAHSKKSKAEQSPVSSDVEVSSPKRQRLSGSANSISNGEYPCNQCDLKFSNFESFQTHLKLHLELLLRKQACPQCKEDFDSQESLLQHLTVHYMTTSTHYVCESCDKQFSSVDDLQKHLLDMHTFVLYHCTLCQEVFDSKVSIQVHLAVKHSNEKKMYRCTACNWDFRKEADLQVHVKHSHLGNPAKAHKCIFCGETFSTEVELQCHITTHSKKYNCRFCSKAFHAVLLLEKHLREKHCVFDPAAENGTANGVPPTSTKKAEPADLQGMLLKNPEAPNSHEASEDDVDASEPMYGCDICGAAYTMEVLLQNHRLRDHNIRPGEDDGSRKKAEFIKGSHKCNVCSRTFFSENGLREHLQTHRGPAKHYMCPICGERFPSLLTLTEHKVTHSKSLDTGTCRICKMPLQSEEEFIEHCQMHPDLRNSLTGFRCVVCMQTVTSTLELKIHGTFHMQKLAGSSAASSPNGQGLQKLYKCALCLKEFRSKQDLVRLDVNGLPYGLCAGCMARSANGQVGGLAPPEPADRPCAGLRCPECNVKFESAEDLESHMQVDHRDLTPETSGPRKGAQTSPVPRKKTYQCIKCQMTFENEREIQIHVANHMIEEGINHECKLCNQMFDSPAKLLCHLIEHSFEGMGGTFKCPVCFTVFVQANKLQQHIFAVHGQEDKIYDCSQCPQKFFFQTELQNHTMSQHAQ.

Residues 1–11 show a composition bias toward basic residues; it reads MSRRKQAKPRS. Disordered stretches follow at residues 1–21, 34–70, and 95–123; these read MSRR…EASD, GGLE…EDVE, and AHRC…VASP. The segment covering 41 to 54 has biased composition (basic and acidic residues); sequence ECDRKSSRALEDRN. Residues serine 55 and serine 58 each carry the phosphoserine modification. The C2H2-type 1; degenerate zinc finger occupies 75 to 101; sequence YTCDHCQQDFESLADLTDHRAHRCPGD. Residues 110–123 are compositionally biased toward polar residues; that stretch reads WVASSPSSKDVASP. 7 consecutive C2H2-type zinc fingers follow at residues 146-168, 174-196, 202-224, 230-252, 271-294, 303-326, and 331-353; these read YPCQ…EQIH, FKCT…IKLH, YHCH…LKTH, FKCS…MQAH, FMCD…LTLH, LQCI…HQAH, and HKCP…LDSH. A disordered region spans residues 354 to 426; it reads RQPDSSNHSV…PLRGQKKMRD (73 aa). The span at 373–382 shows a compositional bias: polar residues; sequence ASMSSATPDS. Low complexity predominate over residues 390-404; that stretch reads SVASMSSATPDSSAS. Residues 436 to 460 form a C2H2-type 9; degenerate zinc finger; it reads YSCPYCSKRDFTSLAVLEIHLKTIH. 3 C2H2-type zinc fingers span residues 468-491, 507-530, and 544-567; these read HTCQ…RKLH, FHCN…RVSH, and FFCN…QQAH. The C2H2-type 13; atypical zinc-finger motif lies at 590 to 615; that stretch reads YSCPYCTNSPIFGSILKLTKHIKENH. A disordered region spans residues 617–654; sequence NIPLAHSKKSKAEQSPVSSDVEVSSPKRQRLSGSANSI. Serine 631 is modified (phosphoserine). Over residues 631–642 the composition is skewed to low complexity; the sequence is SPVSSDVEVSSP. C2H2-type zinc fingers lie at residues 659-681, 689-711, 719-742, 747-770, 777-800, 808-830, and 834-857; these read YPCN…LKLH, QACP…LTVH, YVCE…LDMH, YHCT…AVKH, YRCT…KHSH, HKCI…ITTH, and YNCR…REKH. A C2H2-type 21; degenerate zinc finger spans residues 913–935; that stretch reads YGCDICGAAYTMEVLLQNHRLRD. 3 C2H2-type zinc fingers span residues 957–979, 986–1008, and 1047–1069; these read HKCN…LQTH, YMCP…KVTH, and FRCV…GTFH. At serine 1081 the chain carries Phosphoserine. The segment at 1091–1109 adopts a C2H2-type 25; degenerate zinc-finger fold; that stretch reads YKCALCLKEFRSKQDLVRL. 5 consecutive C2H2-type zinc fingers follow at residues 1147–1170, 1195–1217, 1225–1247, 1256–1279, and 1286–1309; these read LRCP…QVDH, YQCI…VANH, HECK…LIEH, FKCP…FAVH, and YDCS…MSQH. A compositionally biased stretch (basic and acidic residues) spans 1163-1174; that stretch reads ESHMQVDHRDLT. Residues 1163–1190 are disordered; it reads ESHMQVDHRDLTPETSGPRKGAQTSPVP.

The protein belongs to the krueppel C2H2-type zinc-finger protein family. In terms of assembly, homodimer. Interacts with PARP1, SMAD1 and SMAD4. Interacts with EBF1. Interacts with CEP290. In terms of tissue distribution, expressed in brain, eye, olfactory epithelium, spleen and heart. Expressed in the basal layer, consisting of neural precursor cells and immature sensory neurons of the olfactory epithelium, but not in the mature receptor cells.

The protein resides in the nucleus. Its function is as follows. Transcription factor that can both act as an activator or a repressor depending on the context. Plays a central role in BMP signaling and olfactory neurogenesis. Associates with SMADs in response to BMP2 leading to activate transcription of BMP target genes. Acts as a transcriptional repressor via its interaction with EBF1, a transcription factor involved in terminal olfactory receptor neurons differentiation; this interaction preventing EBF1 to bind DNA and activate olfactory-specific genes. Involved in olfactory neurogenesis by participating in a developmental switch that regulates the transition from differentiation to maturation in olfactory receptor neurons. Controls proliferation and differentiation of neural precursors in cerebellar vermis formation. The sequence is that of Zinc finger protein 423 (Znf423) from Rattus norvegicus (Rat).